Here is a 412-residue protein sequence, read N- to C-terminus: CCA-adding enzyme (412 aa).

Residues serine 41 and lysine 44 each contribute to the ATP site. 2 residues coordinate CTP: serine 41 and lysine 44. Mg(2+) contacts are provided by aspartate 53, aspartate 55, and aspartate 106. 3 residues coordinate ATP: histidine 129, lysine 149, and tyrosine 158. Positions 129, 149, and 158 each coordinate CTP.

The protein belongs to the tRNA nucleotidyltransferase/poly(A) polymerase family. Archaeal CCA-adding enzyme subfamily. Homodimer. Mg(2+) serves as cofactor.

It carries out the reaction a tRNA precursor + 2 CTP + ATP = a tRNA with a 3' CCA end + 3 diphosphate. The enzyme catalyses a tRNA with a 3' CCA end + 2 CTP + ATP = a tRNA with a 3' CCACCA end + 3 diphosphate. Its function is as follows. Catalyzes the addition and repair of the essential 3'-terminal CCA sequence in tRNAs without using a nucleic acid template. Adds these three nucleotides in the order of C, C, and A to the tRNA nucleotide-73, using CTP and ATP as substrates and producing inorganic pyrophosphate. tRNA 3'-terminal CCA addition is required both for tRNA processing and repair. Also involved in tRNA surveillance by mediating tandem CCA addition to generate a CCACCA at the 3' terminus of unstable tRNAs. While stable tRNAs receive only 3'-terminal CCA, unstable tRNAs are marked with CCACCA and rapidly degraded. This chain is CCA-adding enzyme, found in Saccharolobus islandicus (strain M.16.27) (Sulfolobus islandicus).